The primary structure comprises 596 residues: Elongation factor 4 (596 aa).

The tr-type G domain maps to Lys2–Glu184. Residues Asp14 to Thr19 and Asn131 to Asp134 each bind GTP.

The protein belongs to the TRAFAC class translation factor GTPase superfamily. Classic translation factor GTPase family. LepA subfamily.

The protein resides in the cell inner membrane. It catalyses the reaction GTP + H2O = GDP + phosphate + H(+). In terms of biological role, required for accurate and efficient protein synthesis under certain stress conditions. May act as a fidelity factor of the translation reaction, by catalyzing a one-codon backward translocation of tRNAs on improperly translocated ribosomes. Back-translocation proceeds from a post-translocation (POST) complex to a pre-translocation (PRE) complex, thus giving elongation factor G a second chance to translocate the tRNAs correctly. Binds to ribosomes in a GTP-dependent manner. This Shewanella halifaxensis (strain HAW-EB4) protein is Elongation factor 4.